We begin with the raw amino-acid sequence, 227 residues long: Class I hydrophobin 4 (227 aa).

A signal peptide spans 1 to 18 (MQFTTFALLAVAAATASA). 4 cysteine pairs are disulfide-bonded: Cys-159–Cys-207, Cys-167–Cys-200, Cys-168–Cys-186, and Cys-208–Cys-222. Residues Asn-190 and Asn-219 are each glycosylated (N-linked (GlcNAc...) asparagine).

It belongs to the fungal hydrophobin family. As to quaternary structure, self-assembles to form functional amyloid fibrils called rodlets. Self-assembly into fibrillar rodlets occurs spontaneously at hydrophobic:hydrophilic interfaces and the rodlets further associate laterally to form amphipathic monolayers. In terms of tissue distribution, expressed in conidia and aerial hyphae.

It is found in the secreted. The protein resides in the cell wall. Functionally, aerial growth, conidiation, and dispersal of filamentous fungi in the environment rely upon a capability of their secreting small amphipathic proteins called hydrophobins (HPBs) with low sequence identity. Class I can self-assemble into an outermost layer of rodlet bundles on aerial cell surfaces, conferring cellular hydrophobicity that supports fungal growth, development and dispersal; whereas Class II form highly ordered films at water-air interfaces through intermolecular interactions but contribute nothing to the rodlet structure. Hcf-4 is a class I hydrophobin that is involved in the development and germination of conidia. This chain is Class I hydrophobin 4, found in Passalora fulva (Tomato leaf mold).